The sequence spans 630 residues: Terpinolene synthase, chloroplastic (630 aa).

A chloroplast-targeting transit peptide spans 1-52 (MALVSILPLSSKSVLHKSWIVSTYEHKAISRTIPNLGLRGRGKSVTHSLRMS). Positions 381, 385, 525, and 533 each coordinate Mg(2+). The DDXXD motif signature appears at 381-385 (DDIYD).

The protein belongs to the terpene synthase family. Tpsd subfamily. It depends on Mg(2+) as a cofactor. The cofactor is Mn(2+). K(+) is required as a cofactor.

It is found in the plastid. It localises to the chloroplast. It carries out the reaction (2E)-geranyl diphosphate = terpinolene + diphosphate. Its pathway is terpene metabolism; oleoresin biosynthesis. In terms of biological role, involved in defensive oleoresin formation in conifers in response to insect attack or other injury. Involved in monoterpene (C10) olefins biosynthesis. This chain is Terpinolene synthase, chloroplastic (ag9), found in Abies grandis (Grand fir).